We begin with the raw amino-acid sequence, 27 residues long: Pregnancy-associated glycoprotein 62 (27 aa).

The protein belongs to the peptidase A1 family. In terms of processing, glycosylated. As to expression, placenta.

The protein is Pregnancy-associated glycoprotein 62 (PAG62) of Capra hircus (Goat).